The sequence spans 315 residues: Protein OPG185 (315 aa).

The N-terminal stretch at 1-16 (MARLPILLLLISLVYS) is a signal peptide. The Ig-like V-type domain maps to 17–121 (TPSPQTSKKI…NDTDKVDYEE (105 aa)). At 17–279 (TPSPQTSKKI…SNYKTKDFVE (263 aa)) the chain is on the virion surface side. Residues Cys34 and Cys103 are joined by a disulfide bond. N-linked (GlcNAc...) asparagine; by host glycans are attached at residues Asn37, Asn69, Asn112, and Asn161. A compositionally biased stretch (polar residues) spans 192–202 (INTVSASSGES). Positions 192–214 (INTVSASSGESTTDETPEPITDK) are disordered. A glycan (N-linked (GlcNAc...) asparagine; by host) is linked at Asn254. A helical transmembrane segment spans residues 280–303 (IFGITALIILSAVAIFCITYYIYN). The Intravirion portion of the chain corresponds to 304-315 (KRSRKYKTENKV).

It belongs to the orthopoxvirus OPG185 family. In terms of assembly, heterodimerizes with OPG040. The heterodimer OPG185-OPG040 interacts with components of the entry fusion complex OPG143 and OPG094. Heterodimer with C3/VPC protein; disulfide-linked. Post-translationally, glycosylated; contains phosphate and sulfate-substituted glycans. O-glycosylation is required for hemagglutination and hemadsorption activities of infected cell membranes.

Its subcellular location is the virion membrane. It localises to the host membrane. Functionally, prevents cell to cell fusion by interacting with and directing the viral OPG040 protein on the host plasma membrane. The OPG185-OPG040 complex associates with components of the entry fusion complex (EFC) presumably to avoid superinfection and syncytium formation. Via its interaction with C3/VCP protein, protects the infected cell and probably also the extracellular enveloped virus from complement attack. The polypeptide is Protein OPG185 (OPG185) (Vaccinia virus (strain Tian Tan) (VACV)).